A 633-amino-acid polypeptide reads, in one-letter code: 1-deoxy-D-xylulose-5-phosphate synthase (633 aa).

The segment covering 1–12 (MSEPTANLQPAS) has biased composition (polar residues). A disordered region spans residues 1-21 (MSEPTANLQPASRTPLLDRVN). Thiamine diphosphate contacts are provided by residues H86 and 127-129 (GHA). D158 is a Mg(2+) binding site. Residues 159 to 160 (GS), N187, and E377 each bind thiamine diphosphate. N187 serves as a coordination point for Mg(2+).

Belongs to the transketolase family. DXPS subfamily. Homodimer. It depends on Mg(2+) as a cofactor. The cofactor is thiamine diphosphate.

It catalyses the reaction D-glyceraldehyde 3-phosphate + pyruvate + H(+) = 1-deoxy-D-xylulose 5-phosphate + CO2. It participates in metabolic intermediate biosynthesis; 1-deoxy-D-xylulose 5-phosphate biosynthesis; 1-deoxy-D-xylulose 5-phosphate from D-glyceraldehyde 3-phosphate and pyruvate: step 1/1. Its function is as follows. Catalyzes the acyloin condensation reaction between C atoms 2 and 3 of pyruvate and glyceraldehyde 3-phosphate to yield 1-deoxy-D-xylulose-5-phosphate (DXP). This Deinococcus geothermalis (strain DSM 11300 / CIP 105573 / AG-3a) protein is 1-deoxy-D-xylulose-5-phosphate synthase.